The following is a 233-amino-acid chain: Cytochrome c biogenesis ATP-binding export protein CcmA (233 aa).

The region spanning 17–233 (FAGEDLLCVR…AAGLFLEDEG (217 aa)) is the ABC transporter domain. An ATP-binding site is contributed by 49–56 (GPNGSGKS).

The protein belongs to the ABC transporter superfamily. CcmA exporter (TC 3.A.1.107) family. In terms of assembly, the complex is composed of two ATP-binding proteins (CcmA) and two transmembrane proteins (CcmB).

It is found in the cell inner membrane. It carries out the reaction heme b(in) + ATP + H2O = heme b(out) + ADP + phosphate + H(+). Part of the ABC transporter complex CcmAB involved in the biogenesis of c-type cytochromes; once thought to export heme, this seems not to be the case, but its exact role is uncertain. Responsible for energy coupling to the transport system. In Rhodospirillum rubrum (strain ATCC 11170 / ATH 1.1.1 / DSM 467 / LMG 4362 / NCIMB 8255 / S1), this protein is Cytochrome c biogenesis ATP-binding export protein CcmA.